The primary structure comprises 103 residues: Translation initiation factor 1A (103 aa).

The 76-residue stretch at 11–86 (TRVRTPRENE…EKCDVIWRYT (76 aa)) folds into the S1-like domain.

Belongs to the eIF-1A family.

Its function is as follows. Seems to be required for maximal rate of protein biosynthesis. Enhances ribosome dissociation into subunits and stabilizes the binding of the initiator Met-tRNA(I) to 40 S ribosomal subunits. In Methanococcus maripaludis (strain C5 / ATCC BAA-1333), this protein is Translation initiation factor 1A (eIF1A).